Reading from the N-terminus, the 315-residue chain is Transcriptional regulator protein Pur-beta (315 aa).

The disordered stretch occupies residues 1 to 39 (MADGDSGSERGGGGPGSFQPAPRGGGGPGGEQETQELAS). Ala2 is subject to N-acetylalanine. 2 positions are modified to phosphoserine: Ser6 and Ser8. Arg23 carries the omega-N-methylarginine modification. Residues 28-254 (PGGEQETQEL…GVFLRVSEVK (227 aa)) form a DNA-binding region. The residue at position 34 (Thr34) is a Phosphothreonine. At Ser104 the chain carries Phosphoserine. Arg155 carries the omega-N-methylarginine modification. Residues 200–220 (DDELAGGPGGGAGGPGGGLYG) are disordered. Positions 205 to 219 (GGPGGGAGGPGGGLY) are enriched in gly residues. Lys270 carries the post-translational modification N6-acetyllysine. Residues 288-298 (RQRDKLYERRG) show a composition bias toward basic and acidic residues. The tract at residues 288-315 (RQRDKLYERRGGGSGGGDESEGEEVDED) is disordered. An Omega-N-methylarginine modification is found at Arg297. Phosphoserine is present on residues Ser301 and Ser307. Residues 305–315 (DESEGEEVDED) are compositionally biased toward acidic residues.

Belongs to the PUR DNA-binding protein family. Homodimer, heterodimer with PURA and heterotrimer with PURA and YBX1/Y-box protein 1. Interacts with MYOCD and SRF. Expressed in muscle cells and in the liver.

It is found in the nucleus. Its function is as follows. Transcriptional regulator which can act as an activator or a repressor. Represses the transcription of ACTA2 in fibroblasts and smooth muscle cells via its ability to interact with the purine-rich strand of a MCAT- containing element in the 5' flanking region of the gene. Represses the transcription of MYOCD, capable of repressing all isoforms of MYOCD but the magnitude of the repressive effects is most notable for the SMC- specific isoforms. Promotes hepatic glucose production by activating the transcription of ADCY6, leading to cAMP accumulation, increased PKA activity, CREB activation, and increased transcription of PCK1 and G6PC genes. Has capacity to bind repeated elements in single-stranded DNA such as the purine-rich single strand of the PUR element located upstream of the MYC gene. Participates in transcriptional and translational regulation of alpha-MHC expression in cardiac myocytes by binding to the purine-rich negative regulatory (PNR) element. Modulates constitutive liver galectin-3 gene transcription by binding to its promoter. May play a role in the dendritic transport of a subset of mRNAs. The sequence is that of Transcriptional regulator protein Pur-beta (Purb) from Rattus norvegicus (Rat).